The primary structure comprises 850 residues: Elongation factor 2 (850 aa).

The tr-type G domain occupies 17 to 351; it reads KNIRNISVIA…QIALKLPSPL (335 aa). Residues 26–33, 159–162, and 213–215 contribute to the GTP site; these read AHVDHGKS, NKLD, and SGL. At His-707 the chain carries Diphthamide.

Belongs to the TRAFAC class translation factor GTPase superfamily. Classic translation factor GTPase family. EF-G/EF-2 subfamily.

It is found in the cytoplasm. The enzyme catalyses GTP + H2O = GDP + phosphate + H(+). It functions in the pathway protein biosynthesis; polypeptide chain elongation. In terms of biological role, catalyzes the GTP-dependent ribosomal translocation step during translation elongation. During this step, the ribosome changes from the pre-translocational (PRE) to the post-translocational (POST) state as the newly formed A-site-bound peptidyl-tRNA and P-site-bound deacylated tRNA move to the P and E sites, respectively. Catalyzes the coordinated movement of the two tRNA molecules, the mRNA and conformational changes in the ribosome. The protein is Elongation factor 2 (EFT1) of Encephalitozoon cuniculi (strain GB-M1) (Microsporidian parasite).